Reading from the N-terminus, the 182-residue chain is Adenine phosphoribosyltransferase (182 aa).

Belongs to the purine/pyrimidine phosphoribosyltransferase family. In terms of assembly, homodimer.

It localises to the cytoplasm. The enzyme catalyses AMP + diphosphate = 5-phospho-alpha-D-ribose 1-diphosphate + adenine. The protein operates within purine metabolism; AMP biosynthesis via salvage pathway; AMP from adenine: step 1/1. Catalyzes a salvage reaction resulting in the formation of AMP, that is energically less costly than de novo synthesis. This chain is Adenine phosphoribosyltransferase, found in Shewanella frigidimarina (strain NCIMB 400).